Reading from the N-terminus, the 316-residue chain is MTQALLCMSHSPLLDHATPPAEVKSAVDDAFARARDFVEAFDPELVVNFGPDHFNGFFYDLMPPFCIGYRAHGTGDYDSFAGDLDVPEDVAADLAQFVLDHGSDVAISRHMEVDHGAVQPMEILHGGDAGARPILPVFVNSIARPFVPMSRVRAFGHAVGDFFAGTDKRVLFLGSGGLSHDPPVPQFATATASQREFLTSGRNPPPEARPARQARTIETARRFAAGEAEIMDLNPEWDRAFLDVCRSGRVEDFDRYTADEMDAAAGHSSHEVRTWVAAYSALRACGEYDVTYEFYRPIKEYIAGFAVTTAQLAGEA.

Histidine 115 acts as the Proton donor in catalysis. Histidine 180 acts as the Proton acceptor in catalysis.

This sequence belongs to the LigB/MhpB extradiol dioxygenase family. Homotetramer. Requires Fe(2+) as cofactor.

The catalysed reaction is 3-(2,3-dihydroxyphenyl)propanoate + O2 = (2Z,4E)-2-hydroxy-6-oxonona-2,4-dienedioate + H(+). The enzyme catalyses (2E)-3-(2,3-dihydroxyphenyl)prop-2-enoate + O2 = (2Z,4E,7E)-2-hydroxy-6-oxonona-2,4,7-trienedioate + H(+). It functions in the pathway aromatic compound metabolism; 3-phenylpropanoate degradation. Catalyzes the non-heme iron(II)-dependent oxidative cleavage of 2,3-dihydroxyphenylpropionic acid and 2,3-dihydroxicinnamic acid into 2-hydroxy-6-ketononadienedioate and 2-hydroxy-6-ketononatrienedioate, respectively. In Rhodococcus rhodochrous, this protein is 2,3-dihydroxyphenylpropionate/2,3-dihydroxicinnamic acid 1,2-dioxygenase.